A 513-amino-acid polypeptide reads, in one-letter code: ATP synthase subunit alpha (513 aa).

G170 to T177 is a binding site for ATP.

The protein belongs to the ATPase alpha/beta chains family. As to quaternary structure, F-type ATPases have 2 components, CF(1) - the catalytic core - and CF(0) - the membrane proton channel. CF(1) has five subunits: alpha(3), beta(3), gamma(1), delta(1), epsilon(1). CF(0) has four main subunits: a(1), b(1), b'(1) and c(9-12).

It is found in the cell inner membrane. It carries out the reaction ATP + H2O + 4 H(+)(in) = ADP + phosphate + 5 H(+)(out). Functionally, produces ATP from ADP in the presence of a proton gradient across the membrane. The alpha chain is a regulatory subunit. The polypeptide is ATP synthase subunit alpha (Gloeobacter violaceus (strain ATCC 29082 / PCC 7421)).